The following is a 354-amino-acid chain: Ferredoxin--NADP reductase, chloroplastic (354 aa).

The N-terminal 35 residues, Met-1 to Ala-35, are a transit peptide targeting the chloroplast. One can recognise an FAD-binding FR-type domain in the interval Lys-69 to Leu-198. N6,N6,N6-trimethyllysine occurs at positions 118 and 124. FAD-binding positions include Arg-130–Ser-133, Cys-151–Arg-153, and Tyr-157. 2 residues coordinate NADP(+): Ser-133 and Arg-153. The residue at position 170 (Lys-170) is an N6,N6-dimethyllysine. Residues Leu-172–Ser-174 and Thr-213 contribute to the FAD site. Residues Thr-213, Val-245–Gly-246, Ser-275–Arg-276, Lys-285, Gly-313–Leu-314, and Glu-352 each bind NADP(+).

Belongs to the ferredoxin--NADP reductase type 1 family. It depends on FAD as a cofactor.

The protein resides in the plastid. Its subcellular location is the chloroplast stroma. The protein localises to the chloroplast thylakoid membrane. The catalysed reaction is 2 reduced [2Fe-2S]-[ferredoxin] + NADP(+) + H(+) = 2 oxidized [2Fe-2S]-[ferredoxin] + NADPH. It functions in the pathway energy metabolism; photosynthesis. May play a key role in regulating the relative amounts of cyclic and non-cyclic electron flow to meet the demands of the plant for ATP and reducing power. The sequence is that of Ferredoxin--NADP reductase, chloroplastic (PETH) from Chlamydomonas reinhardtii (Chlamydomonas smithii).